A 310-amino-acid polypeptide reads, in one-letter code: Junctional adhesion molecule C (310 aa).

Residues 1-31 (MALSRRLRLRLCARLPDFFLLLLFRGCVIEA) form the signal peptide. Topologically, residues 32 to 241 (VNLKSSNRNP…GQDMEVYDLN (210 aa)) are extracellular. An Ig-like V-type domain is found at 35-127 (KSSNRNPVVH…VALNDRKEVD (93 aa)). 2 disulfide bridges follow: C53–C115 and C160–C219. N104 and N192 each carry an N-linked (GlcNAc...) asparagine glycan. The Ig-like C2-type domain occupies 139–236 (PVAPVCRVPK…AARCEGQDME (98 aa)). A helical transmembrane segment spans residues 242–262 (IAGIIGGVLVVLIVLAVITMG). Residues 263 to 310 (ICCAYRRGCFISSKQDGESYKSPGKHEGVNYIRTSEEGDFRHKSSFVI) are Cytoplasmic-facing. Residues C264 and C265 are each lipidated (S-palmitoyl cysteine).

Belongs to the immunoglobulin superfamily. Interacts with ITGAM. Interacts with GORASP2. Proteolytically cleaved from endothelial cells surface into a soluble form by ADAM10 and ADAM17; the release of soluble JAM3 is increased by pro-inflammatory factors. Post-translationally, S-palmitoylated by ZDHHC7. S-palmitoylation promotes expression at tight junctions.

The protein localises to the cell membrane. Its subcellular location is the cell junction. The protein resides in the desmosome. It is found in the tight junction. It localises to the secreted. In terms of biological role, junctional adhesion protein that mediates heterotypic cell-cell interactions with its cognate receptor JAM2 to regulate different cellular processes. Plays a role in homing and mobilization of hematopoietic stem and progenitor cells within the bone marrow. At the surface of bone marrow stromal cells, it contributes to the retention of the hematopoietic stem and progenitor cells expressing JAM3. Plays a central role in leukocytes extravasation by facilitating transmigration through the endothelium. Plays a role in spermatogenesis where JAM2 and JAM3, which are respectively expressed by Sertoli and germ cells, mediate an interaction between both cell types and play an essential role in the anchorage of germ cells onto Sertoli cells and the assembly of cell polarity complexes during spermatid differentiation. Also functions as a counter-receptor for ITGAM, mediating leukocyte-platelet interactions and is involved in the regulation of transepithelial migration of polymorphonuclear neutrophils (PMN). Plays a role in angiogenesis. Plays a role in the regulation of cell migration. During myogenesis, it is involved in myocyte fusion. Promotes chemotaxis of vascular endothelial cells and stimulates angiogenesis. In Rattus norvegicus (Rat), this protein is Junctional adhesion molecule C (Jam3).